The following is a 507-amino-acid chain: Lysine--tRNA ligase (507 aa).

Mg(2+) contacts are provided by Glu406 and Glu413.

The protein belongs to the class-II aminoacyl-tRNA synthetase family. In terms of assembly, homodimer. Mg(2+) serves as cofactor.

Its subcellular location is the cytoplasm. It carries out the reaction tRNA(Lys) + L-lysine + ATP = L-lysyl-tRNA(Lys) + AMP + diphosphate. The chain is Lysine--tRNA ligase from Wolinella succinogenes (strain ATCC 29543 / DSM 1740 / CCUG 13145 / JCM 31913 / LMG 7466 / NCTC 11488 / FDC 602W) (Vibrio succinogenes).